A 928-amino-acid chain; its full sequence is MFSILQGHAGFSRDLATGIWREIKAEDYTFAKRFSKEHPEGKPASMPFKFDVIEEHDPQSLAEMLPLMRRLTSDPHIVAVRGRCLAPKNNVRRKKGNFNVSNPSNIIAMDVDGILDTGGYDKFNLVGMARHIIKMLNSISEDMFPLDAGFIAHASSSAGLKPGIRMHLMLESNVKVTQGQLKFLFTSINDSSKQKFGFDIADLAYYSSVQLHYFADPLFSDGIVDPFKAESKPRLVYVKGSKVNLPNNLVDYETTRGEFKEEFYSLLDQIKGKKIASDKVEETISELEEADDGVYLRIIPKLYHRALEDGVDFAWLEREIKPALSEYIATKDNSRNIQDYFNNGRKQALKAFVNNSKREIPLNLKGVPLKKLEVDSPPEVPYLKINIVPPKGHITFVKASLGTGKTTAVTKWLDAGVLPGNFLAVTNTRALVSSNAKKFSAGQYDKSVDMLNFKRGAIDRMSTTIHSLHKFKSFIGQIDTIFIDECDAVMNDLLFAPVVKQRRECIQVLRDILMTAKTVILSDGDISAETIEAYGSLIDFDKPVAFYNHHRKMLSKAHAYEFPDESSIWVALQTSLEMGEKSILVSDCGPDELNEKGMALRRNTGALVKEIHSNSTSDVDIRRILDYTTNELIDQQIDCLLCSPSVTSGVDFNYFDNVFVITRTSNQAPNMRFQAIRRDRGAQNIYYFIDKSTSGFSAGSEQYNIDEGWLELAQQLYARRRELESRNYTSTLRYYLLDQGATIDIFSESWGTIEGAGKEYTEERIKAILHSTPDYCAPRHADAYEAKLLLVRYYHLESIKDVTVEHVEQYIKDKPNDRAAFFHKMHEMFWEDIKKCSNVTIKPFIEALKGKKKDFFLKTGQSANPKYARMYLGMMGIGKDMNTENIVDWYRTYCKIECMPIPFKFMTEEERAMAEEVMSELGATNEDA.

The region spanning 386 to 516 (NIVPPKGHIT…QVLRDILMTA (131 aa)) is the Helicase ATP-binding domain. Position 399–406 (399–406 (ASLGTGKT)) interacts with ATP. Residues 484–487 (DECD) carry the DEAD box motif.

Belongs to the herpesviridae oribp family.

Displays bipolar ssDNA and dsDNA unwinding activities that require the same core catalytic residues for unwinding in either direction, the 3'-5' direction being more robust. The protein is Putative replication origin binding protein of Escherichia coli (Enterobacteria phage T5).